Here is a 210-residue protein sequence, read N- to C-terminus: Large ribosomal subunit protein uL3 (210 aa).

A compositionally biased stretch (polar residues) spans 131–140 (NRASHGNSLS). A disordered region spans residues 131 to 150 (NRASHGNSLSHRAPGSIGCR). Residue Gln151 is modified to N5-methylglutamine.

This sequence belongs to the universal ribosomal protein uL3 family. Part of the 50S ribosomal subunit. Forms a cluster with proteins L14 and L19. Post-translationally, methylated by PrmB.

Functionally, one of the primary rRNA binding proteins, it binds directly near the 3'-end of the 23S rRNA, where it nucleates assembly of the 50S subunit. The chain is Large ribosomal subunit protein uL3 from Acidithiobacillus ferrooxidans (strain ATCC 23270 / DSM 14882 / CIP 104768 / NCIMB 8455) (Ferrobacillus ferrooxidans (strain ATCC 23270)).